We begin with the raw amino-acid sequence, 636 residues long: Probable potassium transport system protein Kup (636 aa).

The next 12 helical transmembrane spans lie at 23-43 (LVIGAIGVVFGDIGTSPLYSL), 63-83 (IISLLFWAMTIVVSIKYVVFV), 114-134 (VLMMLGIFGACMFYGDAVITP), 150-170 (PQLSRFVIPITLVILVALFLI), 182-202 (FGPVMVVWFVTLGLLGLYNLV), 217-237 (ISFLIAHSLQAFIVLGSVFLV), 260-280 (WFVLVMPCLILNYFGQGAMLL), 298-318 (LLIPMVVLATCATVIASQAVI), 350-370 (IYLPVINWILLVLVVAVVISF), 379-399 (AYGIAVTTTMVITTFLAAVVM), 407-427 (PALVTLLGLSFLLVDLAFFAA), and 432-452 (VAEGGWFPLLLGSTAFFLLMT).

Belongs to the HAK/KUP transporter (TC 2.A.72) family.

The protein resides in the cell inner membrane. The catalysed reaction is K(+)(in) + H(+)(in) = K(+)(out) + H(+)(out). Transport of potassium into the cell. Likely operates as a K(+):H(+) symporter. The polypeptide is Probable potassium transport system protein Kup (Cupriavidus pinatubonensis (strain JMP 134 / LMG 1197) (Cupriavidus necator (strain JMP 134))).